A 347-amino-acid chain; its full sequence is Protein FAM50 homolog (347 aa).

Basic and acidic residues predominate over residues 77 to 113 (EDIVREREKKLAQKKEEKDREKLKALEAKQAEKDRQR). Residues 77 to 142 (EDIVREREKK…EDEEEPLEIK (66 aa)) are disordered. A compositionally biased stretch (acidic residues) spans 123–138 (PEEDEESFDDEDEEEP).

It belongs to the FAM50 family.

The chain is Protein FAM50 homolog from Aedes aegypti (Yellowfever mosquito).